Here is a 326-residue protein sequence, read N- to C-terminus: Transformer-2 protein homolog (326 aa).

Disordered stretches follow at residues 1–114 and 179–326; these read MEVA…PSNV and LHGK…SYRR. Residues 38–55 show a composition bias toward basic and acidic residues; that stretch reads RDSRERSPPRGNSRERSP. Positions 56–85 are enriched in low complexity; that stretch reads PRGGSPNRGGSPNRGGSPNRGGSPNRGGSP. A compositionally biased stretch (polar residues) spans 104-113; that stretch reads RLANTASPSN. In terms of domain architecture, RRM spans 113–191; that stretch reads NVLGVFGLAP…KSIRTDFSAT (79 aa). Over residues 220-239 the composition is skewed to gly residues; it reads YGGGDRYGRGDYGGRGGGGD. Residues 240 to 326 show a composition bias toward basic and acidic residues; sequence RYGRDDRGGD…DERPRDSYRR (87 aa).

Belongs to the splicing factor SR family.

The protein resides in the nucleus. In terms of biological role, sequence-specific RNA-binding protein which participates in the control of pre-mRNA splicing. The protein is Transformer-2 protein homolog (tra2) of Dictyostelium discoideum (Social amoeba).